Here is a 552-residue protein sequence, read N- to C-terminus: Metal transporter Nramp6.1 (552 aa).

N-linked (GlcNAc...) asparagine glycosylation occurs at Asn11. 7 helical membrane-spanning segments follow: residues 55–75 (FLSY…PGNL), 88–108 (ELLW…SLAA), 133–155 (CLWL…GTAF), 159–181 (ILFN…LLLG), 189–209 (KLEL…FGEM), 238–258 (IALL…ALVL), and 275–295 (YFLI…LAVI). Residue Asn306 is glycosylated (N-linked (GlcNAc...) asparagine). The next 5 membrane-spanning stretches (helical) occupy residues 338–358 (IYAI…TYAG), 377–397 (LVTR…GGSS), 402–422 (LIII…IPLL), 438–458 (IYII…NIYY), and 478–498 (VFIG…VIYL). Positions 511–552 (PNKNDPQQQTNMENGLAKSTEGPEMVDRAPYREDLADIPLPE) are disordered. Polar residues predominate over residues 514–523 (NDPQQQTNME). Over residues 535 to 545 (MVDRAPYREDL) the composition is skewed to basic and acidic residues.

The protein belongs to the NRAMP (TC 2.A.55) family.

The protein localises to the membrane. In terms of biological role, probable divalent metal transporter. The polypeptide is Metal transporter Nramp6.1 (Populus trichocarpa (Western balsam poplar)).